We begin with the raw amino-acid sequence, 188 residues long: Ion-translocating oxidoreductase complex subunit B (188 aa).

A hydrophobic region spans residues 1 to 23 (MFTAIWVMVGLAIAIGLILGWSA). One can recognise a 4Fe-4S domain in the interval 29-88 (EGNPLAEKIDAILPQTQCGQCGFPGCRPYAEAIAKGEADINQCPPGGEEGVKKLAELLGV). [4Fe-4S] cluster is bound by residues Cys46, Cys49, Cys54, Cys71, Cys113, Cys116, Cys119, Cys123, Cys143, Cys146, Cys149, and Cys153. 2 consecutive 4Fe-4S ferredoxin-type domains span residues 104-133 (SVAFIDEQTCIGCTLCIQACPVDAISGAAK) and 134-163 (QMHTIIADECTGCELCLAPCPVDCISMVPI).

This sequence belongs to the 4Fe4S bacterial-type ferredoxin family. RnfB subfamily. As to quaternary structure, the complex is composed of six subunits: RnfA, RnfB, RnfC, RnfD, RnfE and RnfG. The cofactor is [4Fe-4S] cluster.

The protein resides in the cell inner membrane. In terms of biological role, part of a membrane-bound complex that couples electron transfer with translocation of ions across the membrane. This is Ion-translocating oxidoreductase complex subunit B from Thiobacillus denitrificans (strain ATCC 25259 / T1).